The sequence spans 206 residues: Ras-related protein ralB-A (206 aa).

21-28 (GSGGVGKS) is a binding site for GTP. The short motif at 43-51 (YEPTKADSY) is the Effector region element. GTP-binding positions include 68–72 (DTAGQ) and 128–131 (NKSD). Residues 180–189 (KMSENKDKNG) show a composition bias toward basic and acidic residues. The segment at 180-206 (KMSENKDKNGKKSGKSKKGFKQRCCLL) is disordered. Over residues 190–200 (KKSGKSKKGFK) the composition is skewed to basic residues. Cysteine methyl ester is present on Cys203. A lipid anchor (S-geranylgeranyl cysteine) is attached at Cys203. Positions 204-206 (CLL) are cleaved as a propeptide — removed in mature form.

The protein belongs to the small GTPase superfamily. Ras family. In terms of assembly, interacts with ralbp1 and rap1gds1. Weakly expressed in adult tissues and highest levels were found in heart, brain and testes.

It is found in the cell membrane. The protein resides in the midbody. The catalysed reaction is GTP + H2O = GDP + phosphate + H(+). Multifunctional GTPase involved in a variety of cellular processes including gene expression, cell migration, cell proliferation, oncogenic transformation and membrane trafficking. Accomplishes its multiple functions by interacting with distinct downstream effectors. Acts as a GTP sensor for GTP-dependent exocytosis of dense core vesicles. Required both to stabilize the assembly of the exocyst complex and to localize functional exocyst complexes to the leading edge of migrating cells. Required for suppression of apoptosis. In late stages of cytokinesis, upon completion of the bridge formation between dividing cells, mediates exocyst recruitment to the midbody to drive abscission. Regulates the actin cytoskeleton to play a role in gastrulation or neurulation. During the cleavage stages, the GTP-bound form induces a cortical reaction that affects the localization of pigment granules. Activated by the FGF pathway via ras and ral-GDS, but independently of raf. Directs ralbp1 to the plasma membrane. Involved in ligand-dependent receptor mediated endocytosis of the EGF and insulin receptors. This is Ras-related protein ralB-A (ralb-a) from Xenopus laevis (African clawed frog).